The primary structure comprises 226 residues: NAD(P)H-hydrate epimerase (226 aa).

The YjeF N-terminal domain occupies 10–215 (AIELDLDLFE…ALQRKYQLNL (206 aa)). A (6S)-NADPHX-binding site is contributed by 58–62 (NNGGD). 2 residues coordinate K(+): Asn-59 and Asp-123. (6S)-NADPHX is bound by residues 127 to 133 (GFGFKPP) and Asp-156. Ser-159 contributes to the K(+) binding site.

Belongs to the NnrE/AIBP family. K(+) serves as cofactor.

It carries out the reaction (6R)-NADHX = (6S)-NADHX. The enzyme catalyses (6R)-NADPHX = (6S)-NADPHX. Catalyzes the epimerization of the S- and R-forms of NAD(P)HX, a damaged form of NAD(P)H that is a result of enzymatic or heat-dependent hydration. This is a prerequisite for the S-specific NAD(P)H-hydrate dehydratase to allow the repair of both epimers of NAD(P)HX. The sequence is that of NAD(P)H-hydrate epimerase from Drosophila persimilis (Fruit fly).